A 279-amino-acid polypeptide reads, in one-letter code: Shikimate dehydrogenase (NADP(+)) (279 aa).

Shikimate is bound by residues 20–22 (SRS) and Thr-67. Residue Lys-71 is the Proton acceptor of the active site. Residue Asp-83 participates in NADP(+) binding. Residues Asn-92 and Asp-108 each coordinate shikimate. NADP(+) is bound by residues 134–138 (GAGGA) and Leu-223. Tyr-225 contributes to the shikimate binding site. Residue Gly-246 coordinates NADP(+).

It belongs to the shikimate dehydrogenase family. In terms of assembly, homodimer.

It carries out the reaction shikimate + NADP(+) = 3-dehydroshikimate + NADPH + H(+). It functions in the pathway metabolic intermediate biosynthesis; chorismate biosynthesis; chorismate from D-erythrose 4-phosphate and phosphoenolpyruvate: step 4/7. Its function is as follows. Involved in the biosynthesis of the chorismate, which leads to the biosynthesis of aromatic amino acids. Catalyzes the reversible NADPH linked reduction of 3-dehydroshikimate (DHSA) to yield shikimate (SA). This chain is Shikimate dehydrogenase (NADP(+)), found in Cereibacter sphaeroides (strain ATCC 17029 / ATH 2.4.9) (Rhodobacter sphaeroides).